Reading from the N-terminus, the 653-residue chain is Probable potassium transport system protein Kup (653 aa).

12 consecutive transmembrane segments (helical) span residues 37–57, 79–99, 134–154, 168–188, 196–216, 243–263, 278–298, 320–340, 368–388, 397–417, 426–446, and 450–470; these read ALLA…SPLY, VLSL…LLLV, ITLG…TPAI, AVFD…LFLV, IGAV…GLGV, LHGF…EALY, WFSM…ALLL, LVAL…AGVF, IYLP…VLGF, AYGI…YVVA, WVAI…FGAN, and VADG…LMTT.

This sequence belongs to the HAK/KUP transporter (TC 2.A.72) family.

It localises to the cell inner membrane. It catalyses the reaction K(+)(in) + H(+)(in) = K(+)(out) + H(+)(out). Transport of potassium into the cell. Likely operates as a K(+):H(+) symporter. The chain is Probable potassium transport system protein Kup from Myxococcus xanthus (strain DK1622).